The following is a 104-amino-acid chain: Large ribosomal subunit protein bL21 (104 aa).

It belongs to the bacterial ribosomal protein bL21 family. Part of the 50S ribosomal subunit. Contacts protein L20.

Functionally, this protein binds to 23S rRNA in the presence of protein L20. This is Large ribosomal subunit protein bL21 from Thermotoga petrophila (strain ATCC BAA-488 / DSM 13995 / JCM 10881 / RKU-1).